The sequence spans 182 residues: Large ribosomal subunit protein uL5 (182 aa).

This sequence belongs to the universal ribosomal protein uL5 family. In terms of assembly, part of the 50S ribosomal subunit; part of the 5S rRNA/L5/L18/L25 subcomplex. Contacts the 5S rRNA and the P site tRNA. Forms a bridge to the 30S subunit in the 70S ribosome.

In terms of biological role, this is one of the proteins that bind and probably mediate the attachment of the 5S RNA into the large ribosomal subunit, where it forms part of the central protuberance. In the 70S ribosome it contacts protein S13 of the 30S subunit (bridge B1b), connecting the 2 subunits; this bridge is implicated in subunit movement. Contacts the P site tRNA; the 5S rRNA and some of its associated proteins might help stabilize positioning of ribosome-bound tRNAs. This Borreliella afzelii (strain PKo) (Borrelia afzelii) protein is Large ribosomal subunit protein uL5.